The sequence spans 314 residues: 4-hydroxy-3-methylbut-2-enyl diphosphate reductase (314 aa).

C12 contacts [4Fe-4S] cluster. Residues H41 and H74 each coordinate (2E)-4-hydroxy-3-methylbut-2-enyl diphosphate. Positions 41 and 74 each coordinate dimethylallyl diphosphate. Isopentenyl diphosphate-binding residues include H41 and H74. C96 is a binding site for [4Fe-4S] cluster. H124 contacts (2E)-4-hydroxy-3-methylbut-2-enyl diphosphate. Residue H124 participates in dimethylallyl diphosphate binding. Residue H124 participates in isopentenyl diphosphate binding. E126 functions as the Proton donor in the catalytic mechanism. T167 provides a ligand contact to (2E)-4-hydroxy-3-methylbut-2-enyl diphosphate. [4Fe-4S] cluster is bound at residue C197. (2E)-4-hydroxy-3-methylbut-2-enyl diphosphate is bound by residues S225, S226, N227, and S269. Residues S225, S226, N227, and S269 each coordinate dimethylallyl diphosphate. Isopentenyl diphosphate-binding residues include S225, S226, N227, and S269.

The protein belongs to the IspH family. The cofactor is [4Fe-4S] cluster.

It catalyses the reaction isopentenyl diphosphate + 2 oxidized [2Fe-2S]-[ferredoxin] + H2O = (2E)-4-hydroxy-3-methylbut-2-enyl diphosphate + 2 reduced [2Fe-2S]-[ferredoxin] + 2 H(+). The catalysed reaction is dimethylallyl diphosphate + 2 oxidized [2Fe-2S]-[ferredoxin] + H2O = (2E)-4-hydroxy-3-methylbut-2-enyl diphosphate + 2 reduced [2Fe-2S]-[ferredoxin] + 2 H(+). The protein operates within isoprenoid biosynthesis; dimethylallyl diphosphate biosynthesis; dimethylallyl diphosphate from (2E)-4-hydroxy-3-methylbutenyl diphosphate: step 1/1. It participates in isoprenoid biosynthesis; isopentenyl diphosphate biosynthesis via DXP pathway; isopentenyl diphosphate from 1-deoxy-D-xylulose 5-phosphate: step 6/6. Catalyzes the conversion of 1-hydroxy-2-methyl-2-(E)-butenyl 4-diphosphate (HMBPP) into a mixture of isopentenyl diphosphate (IPP) and dimethylallyl diphosphate (DMAPP). Acts in the terminal step of the DOXP/MEP pathway for isoprenoid precursor biosynthesis. The chain is 4-hydroxy-3-methylbut-2-enyl diphosphate reductase from Actinobacillus succinogenes (strain ATCC 55618 / DSM 22257 / CCUG 43843 / 130Z).